The following is a 568-amino-acid chain: Acetyl-coenzyme A carboxylase carboxyl transferase subunits beta/alpha (568 aa).

The segment at 1-253 (MAEPARTLAQ…QTAEYLRDAG (253 aa)) is acetyl-coenzyme A carboxylase carboxyl transferase subunit beta. Positions 21–290 (RWTRCPNCRS…APAAERGYRT (270 aa)) constitute a CoA carboxyltransferase N-terminal domain. Residues 21-536 (RWTRCPNCRS…AAALRASIGE (516 aa)) are carboxyltransferase. Zn(2+) contacts are provided by C25, C28, C44, and C47. Residues 25–47 (CPNCRSLVYLRRLRRNGHVCPDC) form a C4-type zinc finger. The tract at residues 254-559 (MVDLVVPRHE…RRRFDRFGDP (306 aa)) is acetyl-coenzyme A carboxylase carboxyl transferase subunit alpha. One can recognise a CoA carboxyltransferase C-terminal domain in the interval 286 to 536 (RGYRTRPRPA…AAALRASIGE (251 aa)).

This sequence in the N-terminal section; belongs to the AccD/PCCB family. In the C-terminal section; belongs to the AccA family. In terms of assembly, acetyl-CoA carboxylase is a heterotetramer composed of biotin carboxyl carrier protein (AccB), biotin carboxylase (AccC) and two subunits of ACCase subunit beta/alpha. It depends on Zn(2+) as a cofactor.

It localises to the cytoplasm. The catalysed reaction is N(6)-carboxybiotinyl-L-lysyl-[protein] + acetyl-CoA = N(6)-biotinyl-L-lysyl-[protein] + malonyl-CoA. Its pathway is lipid metabolism; malonyl-CoA biosynthesis; malonyl-CoA from acetyl-CoA: step 1/1. Its function is as follows. Component of the acetyl coenzyme A carboxylase (ACC) complex. Biotin carboxylase (BC) catalyzes the carboxylation of biotin on its carrier protein (BCCP) and then the CO(2) group is transferred by the transcarboxylase to acetyl-CoA to form malonyl-CoA. This is Acetyl-coenzyme A carboxylase carboxyl transferase subunits beta/alpha (accD) from Saccharopolyspora erythraea (strain ATCC 11635 / DSM 40517 / JCM 4748 / NBRC 13426 / NCIMB 8594 / NRRL 2338).